We begin with the raw amino-acid sequence, 69 residues long: Large ribosomal subunit protein uL29 (69 aa).

This sequence belongs to the universal ribosomal protein uL29 family.

The protein is Large ribosomal subunit protein uL29 of Clostridium perfringens (strain ATCC 13124 / DSM 756 / JCM 1290 / NCIMB 6125 / NCTC 8237 / Type A).